A 190-amino-acid polypeptide reads, in one-letter code: ATP synthase subunit b (190 aa).

The helical transmembrane segment at 34-54 (LDIFETNLINLAILVGILFYF) threads the bilayer.

Belongs to the ATPase B chain family. F-type ATPases have 2 components, F(1) - the catalytic core - and F(0) - the membrane proton channel. F(1) has five subunits: alpha(3), beta(3), gamma(1), delta(1), epsilon(1). F(0) has four main subunits: a(1), b(1), b'(1) and c(10-14). The alpha and beta chains form an alternating ring which encloses part of the gamma chain. F(1) is attached to F(0) by a central stalk formed by the gamma and epsilon chains, while a peripheral stalk is formed by the delta, b and b' chains.

The protein resides in the cellular thylakoid membrane. F(1)F(0) ATP synthase produces ATP from ADP in the presence of a proton or sodium gradient. F-type ATPases consist of two structural domains, F(1) containing the extramembraneous catalytic core and F(0) containing the membrane proton channel, linked together by a central stalk and a peripheral stalk. During catalysis, ATP synthesis in the catalytic domain of F(1) is coupled via a rotary mechanism of the central stalk subunits to proton translocation. In terms of biological role, component of the F(0) channel, it forms part of the peripheral stalk, linking F(1) to F(0). The polypeptide is ATP synthase subunit b (Nostoc punctiforme (strain ATCC 29133 / PCC 73102)).